Consider the following 172-residue polypeptide: Protein-export protein SecB (172 aa).

Belongs to the SecB family. As to quaternary structure, homotetramer, a dimer of dimers. One homotetramer interacts with 1 SecA dimer.

Its subcellular location is the cytoplasm. One of the proteins required for the normal export of preproteins out of the cell cytoplasm. It is a molecular chaperone that binds to a subset of precursor proteins, maintaining them in a translocation-competent state. It also specifically binds to its receptor SecA. The sequence is that of Protein-export protein SecB from Xylella fastidiosa (strain 9a5c).